A 320-amino-acid polypeptide reads, in one-letter code: L-lactate dehydrogenase (320 aa).

NAD(+)-binding positions include valine 18, aspartate 39, arginine 44, tyrosine 69, and glycine 83 to alanine 84. Positions 86 and 92 each coordinate substrate. NAD(+)-binding positions include serine 105, alanine 122 to asparagine 124, and serine 147. Asparagine 124–aspartate 127 contacts substrate. A substrate-binding site is contributed by aspartate 152–arginine 155. Histidine 179 acts as the Proton acceptor in catalysis. Residue tyrosine 223 is modified to Phosphotyrosine. Threonine 232 provides a ligand contact to substrate.

Belongs to the LDH/MDH superfamily. LDH family. As to quaternary structure, homotetramer.

It is found in the cytoplasm. The enzyme catalyses (S)-lactate + NAD(+) = pyruvate + NADH + H(+). It functions in the pathway fermentation; pyruvate fermentation to lactate; (S)-lactate from pyruvate: step 1/1. The quaternary structure is constitutionally similar to the active conformation of allosteric LDHs, and the regulation is independent of the fructose 1,6-bisphosphate-binding site. In terms of biological role, catalyzes the conversion of lactate to pyruvate. The protein is L-lactate dehydrogenase of Lactiplantibacillus pentosus (Lactobacillus pentosus).